Consider the following 490-residue polypeptide: Pentatricopeptide repeat-containing protein At2g20710, mitochondrial (490 aa).

The transit peptide at 1–86 (MKHLLLLRLV…IKMLRKFSRF (86 aa)) directs the protein to the mitochondrion. PPR repeat units follow at residues 138–172 (NYHL…GFLK), 173–207 (GCLP…TVKP), 208–243 (DIFT…GLHL), 244–274 (DWRT…SEQM), 280–310 (RKHA…YKEL), 314–344 (YNTG…WEAG), 349–379 (DIRI…LVQK), and 384–421 (DTST…GWRP).

Belongs to the PPR family. P subfamily.

It is found in the mitochondrion. This is Pentatricopeptide repeat-containing protein At2g20710, mitochondrial from Arabidopsis thaliana (Mouse-ear cress).